We begin with the raw amino-acid sequence, 175 residues long: Adenine phosphoribosyltransferase (175 aa).

The protein belongs to the purine/pyrimidine phosphoribosyltransferase family. As to quaternary structure, homodimer.

The protein localises to the cytoplasm. It catalyses the reaction AMP + diphosphate = 5-phospho-alpha-D-ribose 1-diphosphate + adenine. Its pathway is purine metabolism; AMP biosynthesis via salvage pathway; AMP from adenine: step 1/1. In terms of biological role, catalyzes a salvage reaction resulting in the formation of AMP, that is energically less costly than de novo synthesis. This chain is Adenine phosphoribosyltransferase, found in Lactobacillus johnsonii (strain CNCM I-12250 / La1 / NCC 533).